The following is a 677-amino-acid chain: UvrABC system protein B (677 aa).

The 389-residue stretch at 26–414 (DNLDAGLAHQ…SGNEVVEQVV (389 aa)) folds into the Helicase ATP-binding domain. 39 to 46 (GVTGSGKT) serves as a coordination point for ATP. The Beta-hairpin motif lies at 92–115 (YYDYYQPEAYVPTTDTFIEKDASI). Positions 432–598 (QVDDLMSEIR…GLNKDITDVM (167 aa)) constitute a Helicase C-terminal domain. A UVR domain is found at 637-672 (MKEIDAKEKEMYKAAQNLEFEQAGKLRDEVAELREQ).

Belongs to the UvrB family. In terms of assembly, forms a heterotetramer with UvrA during the search for lesions. Interacts with UvrC in an incision complex.

Its subcellular location is the cytoplasm. The UvrABC repair system catalyzes the recognition and processing of DNA lesions. A damage recognition complex composed of 2 UvrA and 2 UvrB subunits scans DNA for abnormalities. Upon binding of the UvrA(2)B(2) complex to a putative damaged site, the DNA wraps around one UvrB monomer. DNA wrap is dependent on ATP binding by UvrB and probably causes local melting of the DNA helix, facilitating insertion of UvrB beta-hairpin between the DNA strands. Then UvrB probes one DNA strand for the presence of a lesion. If a lesion is found the UvrA subunits dissociate and the UvrB-DNA preincision complex is formed. This complex is subsequently bound by UvrC and the second UvrB is released. If no lesion is found, the DNA wraps around the other UvrB subunit that will check the other stand for damage. This chain is UvrABC system protein B, found in Idiomarina loihiensis (strain ATCC BAA-735 / DSM 15497 / L2-TR).